A 210-amino-acid chain; its full sequence is Protein HEADING DATE REPRESSOR 1 (210 aa).

Residues 1–97 (MEEPASADPP…GKRSSAEMLL (97 aa)) form a disordered region. A coiled-coil region spans residues 29–49 (QQELNKEAADEQLNNQAHEEA). Basic and acidic residues-rich tracts occupy residues 45–54 (AHEEAMKIDD) and 62–79 (DDVH…RKAL). A coiled-coil region spans residues 129 to 184 (RRIAIQEMNRKDREINGLNEQLEEDSRVLELLQKQLADERKKRTEIEKENSMLHEQ).

In terms of assembly, interacts with OSK3 and OSK4. Mostly expressed in leaves, seedlings and floral organs, and, to a lower extent, in panicle, roots, nodes, internodes, leaf joint and sheath.

The protein localises to the nucleus. In terms of biological role, regulates flowering time via a photoperiod-dependent pathway. Suppressor of flowering that upregulates HD1 and down-regulates EHD1 in long days (LD), thus leading to the down-regulation of HD3A and RFT1. Triggers OSK4-mediated HD1 phosphorylation. The protein is Protein HEADING DATE REPRESSOR 1 of Oryza sativa subsp. japonica (Rice).